A 542-amino-acid chain; its full sequence is Prolyl 3-hydroxylase OGFOD1 (542 aa).

The Fe2OG dioxygenase domain occupies 134-239 (DLESTIDMSC…RLSISGWFHG (106 aa)). The Fe cation site is built by histidine 155 and aspartate 157. Position 169 (tyrosine 169) interacts with 2-oxoglutarate. Histidine 218 serves as a coordination point for Fe cation. Arginine 230 lines the 2-oxoglutarate pocket. Residues 373 to 435 (EDEMNDKKEA…TKKESSVPTC (63 aa)) are disordered. A compositionally biased stretch (polar residues) spans 400–416 (ENNQTAISNNSQQSNEQ).

Belongs to the TPA1 family. As to quaternary structure, monomer. It depends on Fe(2+) as a cofactor. Requires L-ascorbate as cofactor.

The protein resides in the cytoplasm. The protein localises to the nucleus. The enzyme catalyses [ribosomal protein uS12]-L-proline + 2-oxoglutarate + O2 = [ribosomal protein uS12]-(3S)-3-hydroxy-L-proline + succinate + CO2. Prolyl 3-hydroxylase that catalyzes 3-hydroxylation of 'Pro-62' of small ribosomal subunit uS12 (RPS23), thereby regulating protein translation termination efficiency. Involved in stress granule formation. This chain is Prolyl 3-hydroxylase OGFOD1 (OGFOD1), found in Pongo abelii (Sumatran orangutan).